The sequence spans 429 residues: 3-phosphoshikimate 1-carboxyvinyltransferase (429 aa).

The 3-phosphoshikimate site is built by Lys11, Ser12, and Arg16. Lys11 is a binding site for phosphoenolpyruvate. Positions 82 and 110 each coordinate phosphoenolpyruvate. Residues Ser155, Gln157, Asp302, and Lys329 each contribute to the 3-phosphoshikimate site. Gln157 contributes to the phosphoenolpyruvate binding site. The active-site Proton acceptor is Asp302. Arg333 and Arg385 together coordinate phosphoenolpyruvate.

Belongs to the EPSP synthase family. Monomer.

It is found in the cytoplasm. The catalysed reaction is 3-phosphoshikimate + phosphoenolpyruvate = 5-O-(1-carboxyvinyl)-3-phosphoshikimate + phosphate. The protein operates within metabolic intermediate biosynthesis; chorismate biosynthesis; chorismate from D-erythrose 4-phosphate and phosphoenolpyruvate: step 6/7. Catalyzes the transfer of the enolpyruvyl moiety of phosphoenolpyruvate (PEP) to the 5-hydroxyl of shikimate-3-phosphate (S3P) to produce enolpyruvyl shikimate-3-phosphate and inorganic phosphate. This chain is 3-phosphoshikimate 1-carboxyvinyltransferase, found in Helicobacter acinonychis (strain Sheeba).